The following is a 707-amino-acid chain: Transcription factor 12 (707 aa).

Residues 25 to 109 (AMFSPPVNSG…TPFMNSNLIG (85 aa)) form a disordered region. Polar residues-rich tracts occupy residues 30–48 (PVNS…QFSG) and 56–76 (GTTS…SRGF). A phosphoserine mark is found at Ser47, Ser67, and Ser79. Residues 81–93 (HYSDHLNDSRLGT) are compositionally biased toward basic and acidic residues. Ser98 carries the phosphoserine modification. A Glycyl lysine isopeptide (Lys-Gly) (interchain with G-Cter in SUMO2) cross-link involves residue Lys110. Residues Ser116 and Ser124 each carry the phosphoserine modification. Residues 119–140 (LYSRDSGLSGCQSSLLRQDLGL) are leucine-zipper. 2 disordered regions span residues 140–222 (LGSP…SMFA) and 249–313 (FGGI…ASHT). Positions 144–163 (AQLSSSGKPGTPYYSFSATS) are enriched in polar residues. Residue Lys181 forms a Glycyl lysine isopeptide (Lys-Gly) (interchain with G-Cter in SUMO2) linkage. Over residues 256 to 269 (STSHMSQSSSYGSL) the composition is skewed to low complexity. The segment covering 282–306 (VSPTDINTSLPPMSSFHRGSTSSSP) has biased composition (polar residues). A Phosphothreonine modification is found at Thr313. A Phosphoserine modification is found at Ser333. 2 disordered regions span residues 349–393 (PDHT…YENS) and 521–605 (HKTP…ERRM). The span at 352-363 (TSSSFPSNPSTP) shows a compositional bias: low complexity. Composition is skewed to polar residues over residues 364–377 (VGSP…TSQW) and 384–393 (APSSPSYENS). Basic and acidic residues-rich tracts occupy residues 543-555 (IKTE…ENLH) and 561-576 (DDMK…DIKV). Residue Lys544 forms a Glycyl lysine isopeptide (Lys-Gly) (interchain with G-Cter in SUMO2) linkage. Ser565 bears the Phosphoserine mark. Lys575 participates in a covalent cross-link: Glycyl lysine isopeptide (Lys-Gly) (interchain with G-Cter in SUMO2). Thr582 carries the post-translational modification Phosphothreonine. Ser583 and Ser584 each carry phosphoserine. Residues 593 to 605 (PEQKIEREKERRM) are compositionally biased toward basic and acidic residues. Residues 602-655 (ERRMANNARERLRVRDINEAFKELGRMCQLHLKSEKPQTKLLILHQAVAVILSL) enclose the bHLH domain. Residues Lys634 and Lys678 each participate in a glycyl lysine isopeptide (Lys-Gly) (interchain with G-Cter in SUMO2) cross-link. The segment at 657-680 (QQVRERNLNPKAACLKRREEEKVS) is class A specific domain. The tract at residues 675–707 (EEEKVSAASAEPPTTLPGTHPGLSETTNPMGHL) is disordered. Residues 686-697 (PPTTLPGTHPGL) show a composition bias toward low complexity. The segment covering 698-707 (SETTNPMGHL) has biased composition (polar residues).

In terms of assembly, efficient DNA binding requires dimerization with another bHLH protein. Forms homo- or heterooligomers with myogenin, E12 and ITF2 proteins. Interacts with PTF1. Interacts with RUNX1T1. Interacts with NEUROD2. Interacts with BHLHA9. In terms of tissue distribution, isoform gamma is highly expressed in lung, kidney, spleen, and is expressed at reduced levels in heart, muscle, liver, pituitary, brain and the trigeminal ganglion. The expression of isoform alpha predominates over isoform gamma in the pituitary and the brain.

Its subcellular location is the nucleus. Functionally, transcriptional regulator. Involved in the initiation of neuronal differentiation. Activates transcription by binding to the E box (5'-CANNTG-3'). May be involved in the functional network that regulates the development of the GnRH axis. This Rattus norvegicus (Rat) protein is Transcription factor 12 (Tcf12).